The chain runs to 527 residues: Peptide chain release factor 3 (527 aa).

The region spanning 9 to 278 is the tr-type G domain; the sequence is DIRRTFAIIS…GLTQWAPKPQ (270 aa). Residues 18–25, 86–90, and 140–143 each bind GTP; these read SHPDAGKT, DTPGH, and NKCD.

Belongs to the TRAFAC class translation factor GTPase superfamily. Classic translation factor GTPase family. PrfC subfamily.

The protein localises to the cytoplasm. Functionally, increases the formation of ribosomal termination complexes and stimulates activities of RF-1 and RF-2. It binds guanine nucleotides and has strong preference for UGA stop codons. It may interact directly with the ribosome. The stimulation of RF-1 and RF-2 is significantly reduced by GTP and GDP, but not by GMP. The chain is Peptide chain release factor 3 from Shewanella denitrificans (strain OS217 / ATCC BAA-1090 / DSM 15013).